The following is a 149-amino-acid chain: Arginine regulator (149 aa).

This sequence belongs to the ArgR family.

It is found in the cytoplasm. It functions in the pathway amino-acid degradation; L-arginine degradation via ADI pathway. Regulates the transcription of the arc operon, involved in arginine catabolism. The protein is Arginine regulator (argR1) of Bacillus cereus (strain ATCC 14579 / DSM 31 / CCUG 7414 / JCM 2152 / NBRC 15305 / NCIMB 9373 / NCTC 2599 / NRRL B-3711).